Consider the following 707-residue polypeptide: Toxin RTX-I translocation ATP-binding protein (707 aa).

A Peptidase C39 domain is found at 1-125; the sequence is MDFYREEDYG…SLYQGKLILV (125 aa). The active site involves His83. The region spanning 154–436 is the ABC transmembrane type-1 domain; it reads FIETLIVSIF…LAQLWQDFQQ (283 aa). The next 5 helical transmembrane spans lie at 158 to 178, 188 to 208, 295 to 315, 387 to 407, and 410 to 430; these read LIVSIFLQIFALITPLFFQVV, FSTLNVITVALAIVVLFEIVL, LVILGSLPFYMGWSIFISPIL, VVMVITLWLGAHLVISGDLSI, and LIAFNMLSGQVIAPVIRLAQL. One can recognise an ABC transporter domain in the interval 468–703; sequence ITFRNIRFRY…PNGLYHYLHQ (236 aa). ATP is bound at residue 502-509; that stretch reads GRSGSGKS.

This sequence belongs to the ABC transporter superfamily. Protein-1 exporter (TC 3.A.1.109) family. In terms of assembly, homodimer.

The protein localises to the cell membrane. Its function is as follows. Involved in the transport of the toxin RTX-I as well as that of RTX-II. The polypeptide is Toxin RTX-I translocation ATP-binding protein (apxIB) (Actinobacillus pleuropneumoniae (Haemophilus pleuropneumoniae)).